A 1370-amino-acid polypeptide reads, in one-letter code: DNA-directed RNA polymerase subunit beta (1370 aa).

The protein belongs to the RNA polymerase beta chain family. In terms of assembly, the RNAP catalytic core consists of 2 alpha, 1 beta, 1 beta' and 1 omega subunit. When a sigma factor is associated with the core the holoenzyme is formed, which can initiate transcription.

It catalyses the reaction RNA(n) + a ribonucleoside 5'-triphosphate = RNA(n+1) + diphosphate. DNA-dependent RNA polymerase catalyzes the transcription of DNA into RNA using the four ribonucleoside triphosphates as substrates. This is DNA-directed RNA polymerase subunit beta from Verminephrobacter eiseniae (strain EF01-2).